Here is a 146-residue protein sequence, read N- to C-terminus: Fluoride-specific ion channel FluC (146 aa).

4 consecutive transmembrane segments (helical) span residues 8–28, 47–67, 91–111, and 121–141; these read FAIA…TLTV, LANL…QALV, IGVL…AVFA, and MLLG…AAVV. Na(+) contacts are provided by glycine 95 and threonine 98.

Belongs to the fluoride channel Fluc/FEX (TC 1.A.43) family.

Its subcellular location is the cell inner membrane. The catalysed reaction is fluoride(in) = fluoride(out). Na(+) is not transported, but it plays an essential structural role and its presence is essential for fluoride channel function. In terms of biological role, fluoride-specific ion channel. Important for reducing fluoride concentration in the cell, thus reducing its toxicity. This chain is Fluoride-specific ion channel FluC, found in Rhodopirellula baltica (strain DSM 10527 / NCIMB 13988 / SH1).